Reading from the N-terminus, the 629-residue chain is Kelch-like protein 13 (629 aa).

One can recognise a BTB domain in the interval 66–135 (CDVTLVPGDG…IYTAKLSLNM (70 aa)). The region spanning 170–271 (CVEVGRIANT…TPQDLINYVQ (102 aa)) is the BACK domain. Kelch repeat units lie at residues 315 to 363 (HLVT…VIGN), 364 to 415 (FLYV…ALKG), 416 to 462 (HLYA…VYGG), 464 to 509 (MYIS…TVGD), 511 to 561 (LYVI…VFEN), and 562 to 610 (KIYV…TLTV).

In terms of assembly, component of the BCR(KLHL9-KLHL13) E3 ubiquitin ligase complex, at least composed of CUL3, KLHL9, KLHL13 and RBX1. Interacts with AURKB.

The protein operates within protein modification; protein ubiquitination. Substrate-specific adapter of a BCR (BTB-CUL3-RBX1) E3 ubiquitin-protein ligase complex required for mitotic progression and cytokinesis. The BCR(KLHL9-KLHL13) E3 ubiquitin ligase complex mediates the ubiquitination of AURKB and controls the dynamic behavior of AURKB on mitotic chromosomes and thereby coordinates faithful mitotic progression and completion of cytokinesis. The sequence is that of Kelch-like protein 13 (KLHL13) from Gallus gallus (Chicken).